Reading from the N-terminus, the 94-residue chain is Probable Fe(2+)-trafficking protein (94 aa).

The protein belongs to the Fe(2+)-trafficking protein family.

Could be a mediator in iron transactions between iron acquisition and iron-requiring processes, such as synthesis and/or repair of Fe-S clusters in biosynthetic enzymes. The sequence is that of Probable Fe(2+)-trafficking protein from Marinomonas sp. (strain MWYL1).